The chain runs to 160 residues: 6,7-dimethyl-8-ribityllumazine synthase (160 aa).

5-amino-6-(D-ribitylamino)uracil is bound by residues F23, 61-63, and 85-87; these read SFE and AVI. Residue 90–91 coordinates (2S)-2-hydroxy-3-oxobutyl phosphate; sequence DT. The active-site Proton donor is H93. Residue F118 participates in 5-amino-6-(D-ribitylamino)uracil binding. Residue R132 coordinates (2S)-2-hydroxy-3-oxobutyl phosphate.

This sequence belongs to the DMRL synthase family.

The enzyme catalyses (2S)-2-hydroxy-3-oxobutyl phosphate + 5-amino-6-(D-ribitylamino)uracil = 6,7-dimethyl-8-(1-D-ribityl)lumazine + phosphate + 2 H2O + H(+). Its pathway is cofactor biosynthesis; riboflavin biosynthesis; riboflavin from 2-hydroxy-3-oxobutyl phosphate and 5-amino-6-(D-ribitylamino)uracil: step 1/2. Functionally, catalyzes the formation of 6,7-dimethyl-8-ribityllumazine by condensation of 5-amino-6-(D-ribitylamino)uracil with 3,4-dihydroxy-2-butanone 4-phosphate. This is the penultimate step in the biosynthesis of riboflavin. The sequence is that of 6,7-dimethyl-8-ribityllumazine synthase from Parasynechococcus marenigrum (strain WH8102).